A 446-amino-acid polypeptide reads, in one-letter code: Adenylosuccinate synthetase (446 aa).

GTP is bound by residues 21 to 27 (GDEGKGK) and 49 to 51 (GHT). The active-site Proton acceptor is the aspartate 22. The Mg(2+) site is built by aspartate 22 and glycine 49. IMP contacts are provided by residues 22–25 (DEGK), 47–50 (NAGH), threonine 141, arginine 155, glutamine 236, threonine 251, and arginine 319. The active-site Proton donor is histidine 50. 315-321 (VTTGRSR) is a binding site for substrate. GTP contacts are provided by residues arginine 321, 347-349 (KLD), and 429-431 (STS).

The protein belongs to the adenylosuccinate synthetase family. Homodimer. Requires Mg(2+) as cofactor.

The protein localises to the cytoplasm. It catalyses the reaction IMP + L-aspartate + GTP = N(6)-(1,2-dicarboxyethyl)-AMP + GDP + phosphate + 2 H(+). It participates in purine metabolism; AMP biosynthesis via de novo pathway; AMP from IMP: step 1/2. Its function is as follows. Plays an important role in the de novo pathway of purine nucleotide biosynthesis. Catalyzes the first committed step in the biosynthesis of AMP from IMP. The chain is Adenylosuccinate synthetase from Polaromonas naphthalenivorans (strain CJ2).